The chain runs to 417 residues: Gamma-glutamyl phosphate reductase (417 aa).

This sequence belongs to the gamma-glutamyl phosphate reductase family.

The protein localises to the cytoplasm. The catalysed reaction is L-glutamate 5-semialdehyde + phosphate + NADP(+) = L-glutamyl 5-phosphate + NADPH + H(+). Its pathway is amino-acid biosynthesis; L-proline biosynthesis; L-glutamate 5-semialdehyde from L-glutamate: step 2/2. Catalyzes the NADPH-dependent reduction of L-glutamate 5-phosphate into L-glutamate 5-semialdehyde and phosphate. The product spontaneously undergoes cyclization to form 1-pyrroline-5-carboxylate. The polypeptide is Gamma-glutamyl phosphate reductase (Serratia marcescens).